Here is a 204-residue protein sequence, read N- to C-terminus: Superoxide dismutase [Mn] (204 aa).

Residues His29, His84, Asp167, and His171 each contribute to the Mn(2+) site.

The protein belongs to the iron/manganese superoxide dismutase family. In terms of assembly, homotetramer. It depends on Mn(2+) as a cofactor.

The enzyme catalyses 2 superoxide + 2 H(+) = H2O2 + O2. Functionally, destroys superoxide anion radicals which are normally produced within the cells and which are toxic to biological systems. The chain is Superoxide dismutase [Mn] (sodA) from Thermus aquaticus.